A 440-amino-acid chain; its full sequence is Protein disulfide-isomerase 2-3 (440 aa).

Positions 1 to 24 (MYKSPLTLLTLLTICFGFFDLSSA) are cleaved as a signal peptide. Thioredoxin domains lie at 25–136 (LYGS…KQIK) and 154–269 (SKEK…ELVE). Residues Cys60 and Cys63 each act as nucleophile in the active site. Cys60 and Cys63 are joined by a disulfide. Residues 143 to 163 (LEGKSKPTGGGSKEKKSEPSA) form a disordered region. N-linked (GlcNAc...) asparagine glycosylation occurs at Asn168. Active-site nucleophile residues include Cys192 and Cys195. Cysteines 192 and 195 form a disulfide. The Prevents secretion from ER signature appears at 437-440 (KDEL).

This sequence belongs to the protein disulfide isomerase family. As to expression, widely expressed.

It localises to the endoplasmic reticulum lumen. It carries out the reaction Catalyzes the rearrangement of -S-S- bonds in proteins.. Acts as a protein-folding catalyst that interacts with nascent polypeptides to catalyze the formation, isomerization, and reduction or oxidation of disulfide bonds. In Arabidopsis thaliana (Mouse-ear cress), this protein is Protein disulfide-isomerase 2-3 (PDIL2-3).